The primary structure comprises 336 residues: CASP-like protein UU1 (336 aa).

The Cytoplasmic portion of the chain corresponds to 1-170 (MGKGPGLDPS…PAMESNKDDN (170 aa)). A helical membrane pass occupies residues 171 to 191 (FFGAIVLSLRAAQIVFTVVGL). Topologically, residues 192–222 (GVMGSLKHTSHGDYYYYYYDFSFTQVDSYIG) are extracellular. The chain crosses the membrane as a helical span at residues 223-243 (VLSLDVIVCLYAIVQLVLCFI). The Cytoplasmic segment spans residues 244-261 (QRSNQGKYLSSPTTVAAK). The helical transmembrane segment at 262-282 (LTFVFDQVLAYALVATAGAAA) threads the bilayer. At 283-307 (GSALEIRKGTSCSGTWTVICSKGEA) the chain is on the extracellular side. The helical transmembrane segment at 308–328 (SVAMSFFAFAFLAATAAVYSV) threads the bilayer. Residues 329–336 (RLLRITGR) are Cytoplasmic-facing.

The protein belongs to the Casparian strip membrane proteins (CASP) family. Homodimer and heterodimers.

It is found in the cell membrane. The protein is CASP-like protein UU1 of Physcomitrium patens (Spreading-leaved earth moss).